The sequence spans 172 residues: Adenylate kinase isoenzyme 6 (172 aa).

Residues G13, G15, K16, T17, and T18 each contribute to the ATP site. The tract at residues 33–56 is NMP; the sequence is NVGDLAREEQLYDGYDEEYDCPIL. Positions 33-56 are NMPbind; it reads NVGDLAREEQLYDGYDEEYDCPIL. The tract at residues 108–118 is LID; the sequence is TRGYNEKKLTD. Positions 109 and 148 each coordinate ATP.

It belongs to the adenylate kinase family. AK6 subfamily. Monomer and homodimer. Interacts with small ribosomal subunit protein uS11. Not a structural component of 43S pre-ribosomes, but transiently interacts with them by binding to uS11. Interacts with COIL (via C-terminus). As to expression, expressed in heart, brain, placenta, lung, liver, skeletal muscle, kidney, pancreas, chorionic villi and the central nervous system.

Its subcellular location is the cytoplasm. The protein localises to the nucleus. It is found in the nucleoplasm. It localises to the cajal body. The catalysed reaction is AMP + ATP = 2 ADP. The enzyme catalyses ATP + H2O = ADP + phosphate + H(+). Broad-specificity nucleoside monophosphate (NMP) kinase that catalyzes the reversible transfer of the terminal phosphate group between nucleoside triphosphates and monophosphates. Also has ATPase activity. Involved in the late cytoplasmic maturation steps of the 40S ribosomal particles, specifically 18S rRNA maturation. While NMP activity is not required for ribosome maturation, ATPase activity is. Associates transiently with small ribosomal subunit protein uS11. ATP hydrolysis breaks the interaction with uS11. May temporarily remove uS11 from the ribosome to enable a conformational change of the ribosomal RNA that is needed for the final maturation step of the small ribosomal subunit. Its NMP activity may have a role in nuclear energy homeostasis. AMP and dAMP are the preferred substrates, but CMP and dCMP are also good substrates. IMP is phosphorylated to a much lesser extent. All nucleoside triphosphates ATP, GTP, UTP, CTP, dATP, dCTP, dGTP, and TTP are accepted as phosphate donors. CTP is the best phosphate donor, followed by UTP, ATP, GTP and dCTP. May be involved in regulation of Cajal body (CB) formation. The sequence is that of Adenylate kinase isoenzyme 6 from Homo sapiens (Human).